Here is a 943-residue protein sequence, read N- to C-terminus: Translation initiation factor IF-2 (943 aa).

Over residues 99–113 (VKAAQTQAAPVQPEQ) the composition is skewed to low complexity. Residues 99-354 (VKAAQTQAAP…LEPNQHAFQA (256 aa)) are disordered. Over residues 117-141 (DAVKARAEAAARAEARAKAEAEAAK) the composition is skewed to basic and acidic residues. Residues 145 to 172 (AKAGNKAKPAAQKPTEAKAETAPVAAET) show a composition bias toward low complexity. The span at 173–197 (KPAEPKEKAVKPKHERNGKGKDAKK) shows a compositional bias: basic and acidic residues. The span at 200–215 (KPAAPAVPQPVVSAEE) shows a compositional bias: low complexity. Over residues 216-250 (QAQRDEEARRAAALRAHQEALLKEKQERQARREAM) the composition is skewed to basic and acidic residues. Residues 251–264 (KQQAEQQAKAAQEA) are compositionally biased toward low complexity. Composition is skewed to basic and acidic residues over residues 295 to 308 (AKKE…DEGQ) and 319 to 335 (GGRD…ERVR). Positions 443–612 (PRPPVVTVMG…LLEAEVLELT (170 aa)) constitute a tr-type G domain. A G1 region spans residues 452-459 (GHVDHGKT). 452–459 (GHVDHGKT) is a GTP binding site. The segment at 477–481 (GITQH) is G2. Residues 498-501 (DTPG) form a G3 region. Residues 498–502 (DTPGH) and 552–555 (NKID) contribute to the GTP site. Positions 552–555 (NKID) are G4. The segment at 588-590 (SAK) is G5.

The protein belongs to the TRAFAC class translation factor GTPase superfamily. Classic translation factor GTPase family. IF-2 subfamily.

It localises to the cytoplasm. One of the essential components for the initiation of protein synthesis. Protects formylmethionyl-tRNA from spontaneous hydrolysis and promotes its binding to the 30S ribosomal subunits. Also involved in the hydrolysis of GTP during the formation of the 70S ribosomal complex. This Neisseria gonorrhoeae (strain NCCP11945) protein is Translation initiation factor IF-2.